Here is a 390-residue protein sequence, read N- to C-terminus: MINRVIWIVLDSVGMGALPDADKYGDVGANTIGNVSKFLGGLKTPNMSKLGLGNIDEIKGIEKVESPIGCYARFKEMSNGKDTTTGHWEMVGINSEQAFPTYPNGFPRDLIEKFEELTGRKVIGNKTASGTEIIKELGEEHVKTGALIVYTSADSVFQIAAHEEVVPLDELYKICEIARNLLTGEHAVARVIARPFEGEVGSFTRTSNRRDFSLVPPYDTVLDNLKKNNLNVMAVGKIEDIFSGKGVTEAVHTKDNMDGVDKTLEYMKEDKKGLIFTNLVDFDMKWGHRNDAEAYGKGIEAFDVRLGEILNEMKDTDVLFITADHGCDPTMPGTDHSREHVPFLAYGKALKENVNLGTRESFADMGQTIAEIFDVEPIRHGKSFLKEIVK.

Mn(2+)-binding residues include Asp-11, Asp-283, His-288, Asp-324, His-325, and His-336.

This sequence belongs to the phosphopentomutase family. The cofactor is Mn(2+).

The protein localises to the cytoplasm. It carries out the reaction 2-deoxy-alpha-D-ribose 1-phosphate = 2-deoxy-D-ribose 5-phosphate. The catalysed reaction is alpha-D-ribose 1-phosphate = D-ribose 5-phosphate. It functions in the pathway carbohydrate degradation; 2-deoxy-D-ribose 1-phosphate degradation; D-glyceraldehyde 3-phosphate and acetaldehyde from 2-deoxy-alpha-D-ribose 1-phosphate: step 1/2. In terms of biological role, isomerase that catalyzes the conversion of deoxy-ribose 1-phosphate (dRib-1-P) and ribose 1-phosphate (Rib-1-P) to deoxy-ribose 5-phosphate (dRib-5-P) and ribose 5-phosphate (Rib-5-P), respectively. The polypeptide is Phosphopentomutase (Clostridium novyi (strain NT)).